A 344-amino-acid polypeptide reads, in one-letter code: Glyceraldehyde-3-phosphate dehydrogenase (344 aa).

NAD(+) contacts are provided by residues T11–I12 and G110. S139–N141 lines the D-glyceraldehyde 3-phosphate pocket. C140 (nucleophile) is an active-site residue. R169 contributes to the NAD(+) binding site. H195 to G196 is a D-glyceraldehyde 3-phosphate binding site. Residue Q302 participates in NAD(+) binding.

The protein belongs to the glyceraldehyde-3-phosphate dehydrogenase family. In terms of assembly, homotetramer.

Its subcellular location is the cytoplasm. It carries out the reaction D-glyceraldehyde 3-phosphate + phosphate + NADP(+) = (2R)-3-phospho-glyceroyl phosphate + NADPH + H(+). The enzyme catalyses D-glyceraldehyde 3-phosphate + phosphate + NAD(+) = (2R)-3-phospho-glyceroyl phosphate + NADH + H(+). It functions in the pathway carbohydrate degradation; glycolysis; pyruvate from D-glyceraldehyde 3-phosphate: step 1/5. This chain is Glyceraldehyde-3-phosphate dehydrogenase, found in Pyrobaculum neutrophilum (strain DSM 2338 / JCM 9278 / NBRC 100436 / V24Sta) (Thermoproteus neutrophilus).